Consider the following 492-residue polypeptide: N-succinylglutamate 5-semialdehyde dehydrogenase (492 aa).

Glycine 220–glycine 225 lines the NAD(+) pocket. Active-site residues include glutamate 243 and cysteine 277.

Belongs to the aldehyde dehydrogenase family. AstD subfamily.

The catalysed reaction is N-succinyl-L-glutamate 5-semialdehyde + NAD(+) + H2O = N-succinyl-L-glutamate + NADH + 2 H(+). It functions in the pathway amino-acid degradation; L-arginine degradation via AST pathway; L-glutamate and succinate from L-arginine: step 4/5. Catalyzes the NAD-dependent reduction of succinylglutamate semialdehyde into succinylglutamate. The protein is N-succinylglutamate 5-semialdehyde dehydrogenase of Shigella flexneri serotype 5b (strain 8401).